Here is a 149-residue protein sequence, read N- to C-terminus: Large ribosomal subunit protein bL20m (149 aa).

The N-terminal 9 residues, 1–9 (MVFLTTRLW), are a transit peptide targeting the mitochondrion.

Belongs to the bacterial ribosomal protein bL20 family. In terms of assembly, component of the mitochondrial ribosome large subunit (39S) which comprises a 16S rRNA and about 50 distinct proteins. Interacts with OXA1L.

It localises to the mitochondrion. The chain is Large ribosomal subunit protein bL20m (Mrpl20) from Mus musculus (Mouse).